The primary structure comprises 418 residues: MAMASPAIGQRPYPLLLDPEPPRYLQSLSGPELPPPPPDRSSRLCVPAPLSTAPGAREGRSARRAARGNLEPPPRASRPARPLRPGLQQRLRRRPGAPRPRDVRSIFEQPQDPRVPAERGEGHCFAELVLPGGPGWCDLCGREVLRQALRCTNCKFTCHPECRSLIQLDCSQQEGLSRDRPSPESTLTVTFSQNVCKPVEETQRPPTLQEIKQKIDSYNTREKNCLGMKLSEDGTYTGFIKVHLKLRRPVTVPAGIRPQSIYDAIKEVNLAATTDKRTSFYLPLDAIKQLHISSTTTVSEVIQGLLKKFMVVDNPQKFALFKRIHKDGQVLFQKLSIADRPLYLRLLAGPDTEVLSFVLKENETGEVEWDAFSIPELQNFLTILEKEEQDKIQQVQKKYDKFRQKLEEALRESQGKPG.

The tract at residues 1–118 is disordered; sequence MAMASPAIGQ…QPQDPRVPAE (118 aa). A2 bears the N-acetylthreonine mark. Residues 77–89 show a composition bias toward low complexity; it reads SRPARPLRPGLQQ. The Phorbol-ester/DAG-type zinc finger occupies 122 to 170; that stretch reads GHCFAELVLPGGPGWCDLCGREVLRQALRCTNCKFTCHPECRSLIQLDC. 2 positions are modified to phosphoserine: S182 and S279. One can recognise a Ras-associating domain in the interval 274 to 364; the sequence is TDKRTSFYLP…LSFVLKENET (91 aa). T352 carries the post-translational modification Phosphothreonine. Residues 366–413 form the SARAH domain; it reads EVEWDAFSIPELQNFLTILEKEEQDKIQQVQKKYDKFRQKLEEALRES.

As to quaternary structure, interacts directly with activated HRAS; a RASSF5-STK4/MST1 complex probably associates with activated HRAS. Interacts with KRAS. Probably interacts with Ras-like GTPases RRAS, MRAS, RAP1B, RAP2A and RALA. Interacts with RRAS2. Can self-associate. Interacts with RSSF1 isoform A. The RSSF1 isoform A-RSSF5 heterodimer probably mediates the association of RSSF1 with HRAS. Isoform 2 interacts with activated RAP1A and ITGAL/LFA-1. Binds STK4/MST1, inhibiting STK4/MST1 autoactivation. In terms of tissue distribution, widely expressed. Frequently down-regulated in lung tumor cell lines and primary lung tumors.

The protein resides in the cytoplasm. Its subcellular location is the cytoskeleton. In terms of biological role, potential tumor suppressor. Seems to be involved in lymphocyte adhesion by linking RAP1A activation upon T-cell receptor or chemokine stimulation to integrin activation. Isoform 2 stimulates lymphocyte polarization and the patch-like distribution of ITGAL/LFA-1, resulting in an enhanced adhesion to ICAM1. Together with RAP1A may participate in regulation of microtubule growth. The association of isoform 2 with activated RAP1A is required for directional movement of endothelial cells during wound healing. May be involved in regulation of Ras apoptotic function. The RASSF5-STK4/MST1 complex may mediate HRAS and KRAS induced apoptosis. The polypeptide is Ras association domain-containing protein 5 (RASSF5) (Homo sapiens (Human)).